The sequence spans 1148 residues: Phospholipid-transporting ATPase IB (1148 aa).

Over 1 to 44 (MSRATSVGDQLEAPARIIYLNQSHLNKFCDNRISTAKYSVLTFL) the chain is Cytoplasmic. The residue at position 5 (Thr-5) is a Phosphothreonine. The chain crosses the membrane as a helical span at residues 45–66 (PRFLYEQIRRAANAFFLFIALL). At 67 to 71 (QQIPD) the chain is on the exoplasmic loop side. Residues 72–94 (VSPTGRYTTLVPLVIILTIAGIK) form a helical membrane-spanning segment. The Cytoplasmic portion of the chain corresponds to 95–276 (EIIEDFKRHK…SNVEKVTNVQ (182 aa)). The chain crosses the membrane as a helical span at residues 277–298 (ILVLFGILLVMALVSSVGALFW). At 299–323 (NGSHGGKSWYIKKMDTNSDNFGYNL) the chain is on the exoplasmic loop side. The chain crosses the membrane as a helical span at residues 324–345 (LTFIILYNNLIPISLLVTLEVV). The Cytoplasmic segment spans residues 346–837 (KYTQALFINW…GAWSYNRVTK (492 aa)). Residue Asp-388 is the 4-aspartylphosphate intermediate of the active site. ATP-binding residues include Asp-388, Lys-389, Thr-390, Glu-488, Phe-529, Lys-552, Arg-585, Thr-665, Gly-666, Asp-667, Arg-755, and Lys-761. Asp-388 is a binding site for Mg(2+). Thr-390 is a binding site for Mg(2+). Asp-781 is a binding site for Mg(2+). ATP-binding residues include Asn-784 and Asp-785. Asp-785 provides a ligand contact to Mg(2+). Residues 838–858 (CILYCFYKNVVLYIIELWFAF) form a helical membrane-spanning segment. Residues 859 to 870 (VNGFSGQILFER) lie on the Exoplasmic loop side of the membrane. A helical transmembrane segment spans residues 871 to 890 (WCIGLYNVIFTALPPFTLGI). Topologically, residues 891–920 (FERSCTQESMLRFPQLYRITQNAEGFNTKV) are cytoplasmic. The helical transmembrane segment at 921–942 (FWGHCINALVHSLILFWVPMKA) threads the bilayer. Residues 943 to 956 (LEHDTPVTSGHATD) are Exoplasmic loop-facing. A helical transmembrane segment spans residues 957-979 (YLFVGNIVYTYVVVTVCLKAGLE). The Cytoplasmic segment spans residues 980–985 (TTAWTK). A helical transmembrane segment spans residues 986–1006 (FSHLAVWGSMLIWLVFFGVYS). The Exoplasmic loop segment spans residues 1007–1024 (TIWPTIPIAPDMKGQATM). The helical transmembrane segment at 1025 to 1049 (VLSSAYFWLGLFLVPTACLIEDVAW) threads the bilayer. Over 1050 to 1148 (RAAKHTCKKT…DTTKENSRKK (99 aa)) the chain is Cytoplasmic.

The protein belongs to the cation transport ATPase (P-type) (TC 3.A.3) family. Type IV subfamily. As to quaternary structure, component of a P4-ATPase flippase complex which consists of a catalytic alpha subunit and an accessory beta subunit. Interacts with TMEM30A to form a flippase complex. It depends on Mg(2+) as a cofactor. In terms of tissue distribution, found in testis, heart and brain. Most abundant in testis. Also detected in fetal tissues. Expressed in retinal photoreceptor cells; detected in retina outer nuclear layer and inner segment (at protein level).

The protein resides in the membrane. It localises to the golgi apparatus membrane. Its subcellular location is the endosome membrane. The protein localises to the cell membrane. It is found in the photoreceptor outer segment membrane. The protein resides in the photoreceptor inner segment membrane. The enzyme catalyses ATP + H2O + phospholipidSide 1 = ADP + phosphate + phospholipidSide 2.. It carries out the reaction a 1,2-diacyl-sn-glycero-3-phospho-L-serine(out) + ATP + H2O = a 1,2-diacyl-sn-glycero-3-phospho-L-serine(in) + ADP + phosphate + H(+). The catalysed reaction is a 1,2-diacyl-sn-glycero-3-phosphoethanolamine(in) + ATP + H2O = a 1,2-diacyl-sn-glycero-3-phosphoethanolamine(out) + ADP + phosphate + H(+). Functionally, catalytic component of a P4-ATPase flippase complex which catalyzes the hydrolysis of ATP coupled to the transport of aminophospholipids from the outer to the inner leaflet of various membranes and ensures the maintenance of asymmetric distribution of phospholipids. Able to translocate phosphatidylserine, but not phosphatidylcholine. Phospholipid translocation also seems to be implicated in vesicle formation and in uptake of lipid signaling molecules. Reconstituted to liposomes, the ATP8A2:TMEM30A flippase complex predominantly transports phosphatidylserine (PS) and to a lesser extent phosphatidylethanolamine (PE). Phospholipid translocation is not associated with a countertransport of an inorganic ion or other charged substrate from the cytoplasmic side toward the exoplasm in connection with the phosphorylation from ATP. ATP8A2:TMEM30A may be involved in regulation of neurite outgrowth. Proposed to function in the generation and maintenance of phospholipid asymmetry in photoreceptor disk membranes and neuronal axon membranes. May be involved in vesicle trafficking in neuronal cells. Required for normal visual and auditory function; involved in photoreceptor and inner ear spiral ganglion cell survival. The polypeptide is Phospholipid-transporting ATPase IB (Mus musculus (Mouse)).